We begin with the raw amino-acid sequence, 545 residues long: Probable sucrose-6-phosphate hydrolase (545 aa).

Substrate is bound by residues 107–110 (LLND), Gln-126, 169–170 (FS), 230–231 (RD), and Glu-285. The active site involves Asp-110.

Belongs to the glycosyl hydrolase 32 family.

The protein resides in the cytoplasm. It carries out the reaction Hydrolysis of terminal non-reducing beta-D-fructofuranoside residues in beta-D-fructofuranosides.. The protein operates within glycan biosynthesis; sucrose metabolism. Its function is as follows. Enables the bacterium to metabolize sucrose as a sole carbon source. This chain is Probable sucrose-6-phosphate hydrolase, found in Psychromonas ingrahamii (strain DSM 17664 / CCUG 51855 / 37).